Reading from the N-terminus, the 133-residue chain is Small ribosomal subunit protein uS8 (133 aa).

The protein belongs to the universal ribosomal protein uS8 family. In terms of assembly, part of the 30S ribosomal subunit. Contacts proteins S5 and S12.

Its function is as follows. One of the primary rRNA binding proteins, it binds directly to 16S rRNA central domain where it helps coordinate assembly of the platform of the 30S subunit. This chain is Small ribosomal subunit protein uS8, found in Koribacter versatilis (strain Ellin345).